The following is a 74-amino-acid chain: Defensin-like protein P322 (74 aa).

Positions 1–19 (MRFFATFFLLAMLVVATKM) are cleaved as a signal peptide. Cystine bridges form between C30-C74, C41-C61, C47-C68, and C51-C70.

It belongs to the DEFL family. Protease inhibitor I18 (RTI/MTI-2) subfamily. As to expression, tuber.

The protein localises to the secreted. In Solanum tuberosum (Potato), this protein is Defensin-like protein P322.